A 40-amino-acid polypeptide reads, in one-letter code: Snaclec tokaracetin subunit beta (40 aa).

A disulfide bridge connects residues cysteine 2 and cysteine 13. The 32-residue stretch at 9–40 (YDEHCYRVFQQKMNWEDAEKFCTQQHKGXHLX) folds into the C-type lectin domain.

The protein belongs to the snaclec family. Heterodimer of subunits alpha and beta; disulfide-linked. As to expression, expressed by the venom gland.

Its subcellular location is the secreted. Its function is as follows. Platelet antagonist that specifically and reversibly binds to a site on platelet glycoprotein Ibalpha (GP1BA) close to or identical with the site for vWF binding. It inhibits the binding of vWF to platelets and vWF-dependent shear-induced platelet aggregation. In Protobothrops tokarensis (Tokara habu), this protein is Snaclec tokaracetin subunit beta.